Consider the following 162-residue polypeptide: Selenoprotein F (162 aa).

The signal sequence occupies residues 1–28; sequence MAARRDGWLGPAFGLRLLLATVLQTVSA. Selenocysteine 93 is a non-standard amino acid (selenocysteine).

The protein belongs to the selenoprotein M/F family. In terms of assembly, forms a tight complex with UGGT1/UGCGL1. Interacts with UGGT2/UGCGL2. Interacts with RDH11.

Its subcellular location is the endoplasmic reticulum lumen. In terms of biological role, may be involved in redox reactions associated with the formation of disulfide bonds. May contribute to the quality control of protein folding in the endoplasmic reticulum. May regulate protein folding by enhancing the catalytic activity of UGGT1/UGCGL1 and UGGT2/UGCGL2. The protein is Selenoprotein F of Bos taurus (Bovine).